The chain runs to 123 residues: Small ribosomal subunit protein uS12 (123 aa).

A disordered region spans residues 1–47; sequence MPTINQLVRKGRKKAEKKQSTPALKGGPQKRGVCTRVYTSTPKKPNS. Aspartate 89 carries the post-translational modification 3-methylthioaspartic acid.

Belongs to the universal ribosomal protein uS12 family. In terms of assembly, part of the 30S ribosomal subunit. Contacts proteins S8 and S17. May interact with IF1 in the 30S initiation complex.

Its function is as follows. With S4 and S5 plays an important role in translational accuracy. Functionally, interacts with and stabilizes bases of the 16S rRNA that are involved in tRNA selection in the A site and with the mRNA backbone. Located at the interface of the 30S and 50S subunits, it traverses the body of the 30S subunit contacting proteins on the other side and probably holding the rRNA structure together. The combined cluster of proteins S8, S12 and S17 appears to hold together the shoulder and platform of the 30S subunit. The chain is Small ribosomal subunit protein uS12 from Desulforapulum autotrophicum (strain ATCC 43914 / DSM 3382 / VKM B-1955 / HRM2) (Desulfobacterium autotrophicum).